The primary structure comprises 327 residues: Ferrochelatase 2 (327 aa).

Residues His-201 and Glu-282 each contribute to the Fe cation site.

This sequence belongs to the ferrochelatase family.

The protein resides in the cytoplasm. It catalyses the reaction heme b + 2 H(+) = protoporphyrin IX + Fe(2+). It functions in the pathway porphyrin-containing compound metabolism; protoheme biosynthesis; protoheme from protoporphyrin-IX: step 1/1. Functionally, catalyzes the ferrous insertion into protoporphyrin IX. This chain is Ferrochelatase 2, found in Shewanella oneidensis (strain ATCC 700550 / JCM 31522 / CIP 106686 / LMG 19005 / NCIMB 14063 / MR-1).